The chain runs to 388 residues: Processive diacylglycerol beta-glucosyltransferase (388 aa).

It belongs to the glycosyltransferase 28 family. UgtP subfamily.

It localises to the cell membrane. The enzyme catalyses a 1,2-diacyl-3-O-(beta-D-glucopyranosyl)-sn-glycerol + UDP-alpha-D-glucose = a 1,2-diacyl-3-O-(beta-D-Glc-(1-&gt;6)-beta-D-Glc)-sn-glycerol + UDP + H(+). It carries out the reaction a 1,2-diacyl-3-O-(beta-D-Glc-(1-&gt;6)-beta-D-Glc)-sn-glycerol + UDP-alpha-D-glucose = a 1,2-diacyl-3-O-(beta-D-Glc-(1-&gt;6)-beta-D-Glc-(1-&gt;6)-beta-D-Glc)-sn-glycerol + UDP + H(+). The catalysed reaction is a 1,2-diacyl-sn-glycerol + UDP-alpha-D-glucose = a 1,2-diacyl-3-O-(beta-D-glucopyranosyl)-sn-glycerol + UDP + H(+). Its pathway is glycolipid metabolism; diglucosyl-diacylglycerol biosynthesis. Processive glucosyltransferase involved in the biosynthesis of both the bilayer- and non-bilayer-forming membrane glucolipids. Is able to successively transfer up to three glucosyl residues to diacylglycerol (DAG), thereby catalyzing the formation of beta-monoglucosyl-DAG (3-O-(beta-D-glucopyranosyl)-1,2-diacyl-sn-glycerol), beta-diglucosyl-DAG (3-O-(beta-D-glucopyranosyl-beta-(1-&gt;6)-D-glucopyranosyl)-1,2-diacyl-sn-glycerol) and beta-triglucosyl-DAG (3-O-(beta-D-glucopyranosyl-beta-(1-&gt;6)-D-glucopyranosyl-beta-(1-&gt;6)-D-glucopyranosyl)-1,2-diacyl-sn-glycerol). Beta-diglucosyl-DAG is the predominant glycolipid found in Bacillales and is also used as a membrane anchor for lipoteichoic acid (LTA). This chain is Processive diacylglycerol beta-glucosyltransferase, found in Bacillus cereus (strain AH187).